Consider the following 415-residue polypeptide: Elongation factor 1-gamma 1 (415 aa).

Serine 2 is modified (N-acetylserine). Positions serine 2–lysine 78 constitute a GST N-terminal domain. At threonine 32 the chain carries Phosphothreonine. Residues aspartate 89–leucine 215 enclose the GST C-terminal domain. The segment at aspartate 212 to histidine 256 is disordered. The region spanning proline 254–lysine 415 is the EF-1-gamma C-terminal domain.

In terms of assembly, the eukaryotic elongation factor 1 complex (eEF1) is probably a heterohexamer. Two trimeric complexes, each composed of eEF1A (TEF1 or TEF2), eEF1Balpha (EFB1) and eEF1Bgamma (CAM1 or TEF4), are probably dimerized via the eF1Bgamma subunits. The eEF1B subcomplex with the GEF activity is formed of eEF1Balpha and eEF1Bgamma. CAM1 interacts with EFB1. Component of a complex bound to MXR1 promoter region.

It is found in the cytoplasm. The protein localises to the nucleus. Its pathway is protein biosynthesis; polypeptide chain elongation. In terms of biological role, subunit of the eukaryotic elongation factor 1 complex (eEF1). Probably plays a role in anchoring the complex to other cellular components. May be involved in transcriptional regulation of MXR1. The protein is Elongation factor 1-gamma 1 (CAM1) of Saccharomyces cerevisiae (strain ATCC 204508 / S288c) (Baker's yeast).